We begin with the raw amino-acid sequence, 179 residues long: MPLNVQDKKAIVADVGAQLAGAQTVVLAEYRGIPVEQLTKLRASARDQGVYLRVLKNTLARRAAQGTQFEPLADSMVGPLIYGISADPIASAKVLQNFAKTQDKLVITAGLYNGKLLDVAGVKALATIPSRDELLSQLLGVMLAPVSAMARVLGAVAAQKAAGAPAEAGTEANETPAAE.

The protein belongs to the universal ribosomal protein uL10 family. As to quaternary structure, part of the ribosomal stalk of the 50S ribosomal subunit. The N-terminus interacts with L11 and the large rRNA to form the base of the stalk. The C-terminus forms an elongated spine to which L12 dimers bind in a sequential fashion forming a multimeric L10(L12)X complex.

Forms part of the ribosomal stalk, playing a central role in the interaction of the ribosome with GTP-bound translation factors. In Polynucleobacter necessarius subsp. necessarius (strain STIR1), this protein is Large ribosomal subunit protein uL10.